The primary structure comprises 552 residues: Rqc2 homolog RqcH (552 aa).

2 coiled-coil regions span residues 271-317 (RDRV…QKGE) and 357-398 (NAQR…MLGQ).

This sequence belongs to the NEMF family. Associates with stalled 50S ribosomal subunits, binds to RqcH. Recombinant protein interacts with the N-terminal 30 kDa of human fibronectin (FN1).

In terms of biological role, key component of the ribosome quality control system (RQC), a ribosome-associated complex that mediates the extraction of incompletely synthesized nascent chains from stalled ribosomes and their subsequent degradation. RqcH recruits Ala-charged tRNA, and with RqcP directs the elongation of stalled nascent chains on 50S ribosomal subunits, leading to non-templated C-terminal alanine extensions (Ala tail). The Ala tail promotes nascent chain degradation. May add between 1 and at least 8 Ala residues. Binds to stalled 50S ribosomal subunits. This Streptococcus suis (strain 05ZYH33) protein is Rqc2 homolog RqcH.